A 132-amino-acid chain; its full sequence is Small ribosomal subunit protein uS8 (132 aa).

The protein belongs to the universal ribosomal protein uS8 family. As to quaternary structure, part of the 30S ribosomal subunit. Contacts proteins S5 and S12.

Functionally, one of the primary rRNA binding proteins, it binds directly to 16S rRNA central domain where it helps coordinate assembly of the platform of the 30S subunit. The chain is Small ribosomal subunit protein uS8 from Lactobacillus helveticus (strain DPC 4571).